Consider the following 172-residue polypeptide: MTDAPNTPADNAAAQAPQLRVLAQYVKDLSFENPGAPETLRPGQQAPAIDLAIDVQARTAGEDTFEVVLTVNAKASRDESVVFIAELSYAGLFQLANVGETDREPFLLIECPRLIFPFARRVLADATRDGNFPPLMLDPVDFAGLYRAQLAKRAAAAPGSESNGNGDPAAAN.

Belongs to the SecB family. As to quaternary structure, homotetramer, a dimer of dimers. One homotetramer interacts with 1 SecA dimer.

The protein resides in the cytoplasm. Functionally, one of the proteins required for the normal export of preproteins out of the cell cytoplasm. It is a molecular chaperone that binds to a subset of precursor proteins, maintaining them in a translocation-competent state. It also specifically binds to its receptor SecA. The chain is Protein-export protein SecB from Maricaulis maris (strain MCS10) (Caulobacter maris).